We begin with the raw amino-acid sequence, 447 residues long: Interferon-induced protein 44-like (447 aa).

Positions 1 to 159 (MKVTARLTWI…PVECEIFRVD (159 aa)) constitute a TLDc domain.

This sequence belongs to the IFI44 family. HA-28 antigen forms a complex with Kb MHC in BALB.B donor cells. Interacts with FKBP5; this interaction modulates IKBKB and IKBKE kinase activities. As to expression, expressed on cells of the hematopoietic lineage. Detected in transformed cell lines of the macrophage and B-cell lineage. Expressed in spleen and bone marrow.

It localises to the cytoplasm. In terms of biological role, type I interferon-stimulated gene (ISG) that plays a critical role in antiviral and antibacterial activity. During bacterial infection, promotes macrophage differentiation and facilitates inflammatory cytokine secretion. Plays a role in the control of respiratory syncycial virus/RSV infection, reducing the ability of the virus to replicate. Acts as a feedback regulator of IFN responses by negatively regulating IKBKB kinase activity through interaction with FKBP5. Precursor of the histocompatibility antigen HA-28 in BALB.B mice. More generally, minor histocompatibility antigens refer to immunogenic peptide which, when complexed with MHC, can generate an immune response after recognition by specific T-cells. The peptides are derived from polymorphic intracellular proteins, which are cleaved by normal pathways of antigen processing. The binding of these peptides to MHC molecules and its expression on the cell surface can stimulate T-cell responses and thereby trigger graft rejection or graft-versus-host disease (GVHD). More specifically, HA-28 minor antigen is transcribed in the BALB.B donor but not in host C57BL/6 cells. HA-28 is presented to the donor BALB.B cell surface by Kb MHC. This complex HA-28/Kb MHC elicits cytotoxic T-cell response in C57BL/6 mice immunized with BALB.B spleen cells. It induces C57BL/6 mice cells recognition and lysis by CD8 T-cell from BALB.B mice. The sequence is that of Interferon-induced protein 44-like (Ifi44l) from Mus musculus (Mouse).